The following is a 41-amino-acid chain: Photosystem II reaction center protein Y (41 aa).

The chain crosses the membrane as a helical span at residues 4-22 (LIVVVLPILAAVTWVVFNI).

The protein belongs to the PsbY family. PSII is composed of 1 copy each of membrane proteins PsbA, PsbB, PsbC, PsbD, PsbE, PsbF, PsbH, PsbI, PsbJ, PsbK, PsbL, PsbM, PsbT, PsbX, PsbY, Psb30/Ycf12, peripheral proteins PsbO, CyanoQ (PsbQ), PsbU, PsbV and a large number of cofactors. It forms dimeric complexes.

It is found in the cellular thylakoid membrane. Its function is as follows. Loosely associated component of the core of photosystem II (PSII), it is not always seen in crystals. PSII is a light-driven water plastoquinone oxidoreductase, using light energy to abstract electrons from H(2)O, generating a proton gradient subsequently used for ATP formation. The chain is Photosystem II reaction center protein Y from Prochlorococcus marinus (strain MIT 9211).